The primary structure comprises 410 residues: Translation initiation factor 2 subunit gamma (410 aa).

The tr-type G domain maps to 6–203 (QSEVNIGMVG…AIQDFIPTPE (198 aa)). A G1 region spans residues 15–22 (GHVDHGKT). Mg(2+) is bound by residues Asp-18, Thr-22, Gly-43, and Ser-45. 18 to 23 (DHGKTS) contacts GTP. Residues 43–47 (GISIR) are G2. Zn(2+) contacts are provided by Cys-58, Cys-61, Cys-73, and Cys-76. Residues 90 to 93 (DAPG) are G3. GTP is bound by residues 146–149 (NKID) and 181–183 (SAH). The tract at residues 146-149 (NKID) is G4. The segment at 181–183 (SAH) is G5.

The protein belongs to the TRAFAC class translation factor GTPase superfamily. Classic translation factor GTPase family. EIF2G subfamily. As to quaternary structure, heterotrimer composed of an alpha, a beta and a gamma chain. The cofactor is Mg(2+).

The enzyme catalyses GTP + H2O = GDP + phosphate + H(+). In terms of biological role, eIF-2 functions in the early steps of protein synthesis by forming a ternary complex with GTP and initiator tRNA. The protein is Translation initiation factor 2 subunit gamma of Methanococcus maripaludis (strain DSM 14266 / JCM 13030 / NBRC 101832 / S2 / LL).